Consider the following 639-residue polypeptide: Versicolorin B synthase stcN (639 aa).

An N-terminal signal peptide occupies residues 1–19 (MPAWSLLVLSALPVVGMFA). Residues 77-78 (TA) and 98-99 (EA) each bind FAD. A glycan (N-linked (GlcNAc...) asparagine) is linked at asparagine 109. An FAD-binding site is contributed by 164 to 167 (GAML). N-linked (GlcNAc...) asparagine glycosylation is present at asparagine 214. In terms of domain architecture, PAS spans 263–301 (GFSNGQLLGRSYITHTIHPKTRRRDTASTSYLQTALRTS). Residues asparagine 444 and asparagine 501 are each glycosylated (N-linked (GlcNAc...) asparagine). Residues alanine 609 and 620–621 (PM) each bind FAD.

This sequence belongs to the GMC oxidoreductase family. In terms of assembly, homodimer. It depends on FAD as a cofactor.

It localises to the cytoplasm. Its subcellular location is the cytosol. It carries out the reaction (2S-3S)-versiconal hemiacetal = versicolorin B + H2O. It catalyses the reaction (S)-5'-oxoaverantin + H(+) = (1'S,5'S)-averufin + H2O. It participates in mycotoxin biosynthesis; sterigmatocystin biosynthesis. In terms of biological role, norsolorinic acid reductase; part of the gene cluster that mediates the biosynthesis of sterigmatocystin (ST), a polyketide-derived furanocoumarin which is part of the most toxic and carcinogenic compounds among the known mycotoxins. The first step in the biosynthesis of sterigmatocystin is the production of hexanoate by the fatty acid synthase (FAS) units stcJ and stcK. The polyketide backbone is assembled by the non-reducing polyketide synthase stcA by condensation of the starter hexanoyl-CoA and 7 malonyl-CoA extender units followed by cyclization and release of norsolorinic acid. Norsolorinic acid is the first stable intermediate in the biosynthesis of sterigmatocystin and is converted into averantin (AVN) by the ketoreductase stcE which reduces the hexanoate ketone to an alcohol. Averantin is then oxidized into 5'-hydroxyaverantin (HAVN) by the cytochrome P450 monooxygenase stcF. 5'-hydroxyaverantin is further converted to 5'-oxyaverantin (OAVN) by the 5'-hydroxyaverantin dehydrogenase stcG. The next step is the conversion of OAVN into averufin (AVF) which is catalyzed by a yet to be identified enzyme. The cytochrome P450 monooxygenase stcB and the flavin-binding monooxygenase stcW are both required for the conversion of averufin to 1-hydroxyversicolorone. The esterase stcI probably catalyzes the formation of versiconal hemiacetal acetate from 1-hydroxyversicolorone. The oxydoreductase stcN then probably catalyzes the biosynthetic step from versiconal to versicolorin B (VERB). The next step is performed by the versicolorin B desaturase stcL to produce versicolorin A (VERA). The ketoreductase stcU and the cytochrome P450 monooxygenase stcS are involved in the conversion of versicolorin A to demethylsterigmatocystin. The Baeyer-Villiger oxidas stcQ and the reductase stcR might be involved in the biosynthetic step from versicolorin A to demethylsterigmatocystin. The final step in the biosynthesis of sterigmatocystin is the methylation of demethylsterigmatocystin catalyzed by the methyltransferase stcP. The chain is Versicolorin B synthase stcN from Emericella nidulans (strain FGSC A4 / ATCC 38163 / CBS 112.46 / NRRL 194 / M139) (Aspergillus nidulans).